The following is a 196-amino-acid chain: Ankyrin repeat domain-containing protein 66 (196 aa).

ANK repeat units follow at residues Ser-7–Tyr-37, Asn-43–Leu-72, and Val-76–Ala-105. The disordered stretch occupies residues Glu-152–Val-196. Residues Arg-187 to Val-196 are compositionally biased toward polar residues.

This is Ankyrin repeat domain-containing protein 66 (ANKRD66) from Homo sapiens (Human).